The primary structure comprises 334 residues: HTH-type transcriptional repressor PurR (334 aa).

Positions 2 to 56 (ATIKDVARLAGVSTTTVSHVINKTRFVAEATQEKVMKAVDELNYAPSAVARSLKC) constitute an HTH lacI-type domain. The H-T-H motif DNA-binding region spans 4-23 (IKDVARLAGVSTTTVSHVIN). Residues 48–56 (SAVARSLKC) mediate DNA binding. 4 residues coordinate hypoxanthine: Phe73, Lys189, Phe220, and Asp274.

Homodimer.

It participates in purine metabolism; purine nucleotide biosynthesis [regulation]. Its function is as follows. Is the main repressor of the genes involved in the de novo synthesis of purine nucleotides, regulating purB, purC, purEK, purF, purHD, purL, purMN and guaBA expression. PurR is allosterically activated to bind its cognate DNA by binding the purine corepressors, hypoxanthine or guanine, thereby effecting transcription repression. This Vibrio parahaemolyticus serotype O3:K6 (strain RIMD 2210633) protein is HTH-type transcriptional repressor PurR.